Reading from the N-terminus, the 194-residue chain is Fe/S biogenesis protein NfuA (194 aa).

2 residues coordinate [4Fe-4S] cluster: Cys-152 and Cys-155.

This sequence belongs to the NfuA family. Homodimer. The cofactor is [4Fe-4S] cluster.

In terms of biological role, involved in iron-sulfur cluster biogenesis. Binds a 4Fe-4S cluster, can transfer this cluster to apoproteins, and thereby intervenes in the maturation of Fe/S proteins. Could also act as a scaffold/chaperone for damaged Fe/S proteins. The protein is Fe/S biogenesis protein NfuA of Ectopseudomonas mendocina (strain ymp) (Pseudomonas mendocina).